Reading from the N-terminus, the 400-residue chain is Calsequestrin-2 (400 aa).

The N-terminal stretch at 1–19 (MKRTHLFIVGVYVLSSCRA) is a signal peptide. Tyr282 is modified (phosphotyrosine). A glycan (N-linked (GlcNAc...) asparagine) is linked at Asn335. The tract at residues 365 to 400 (VLSGKINTEDDDDEDDDDDNSDEEDNDDSDDDDDDE) is disordered. Residues 373 to 400 (EDDDDEDDDDDNSDEEDNDDSDDDDDDE) are compositionally biased toward acidic residues.

The protein belongs to the calsequestrin family. In terms of assembly, monomer, homodimer and homooligomer. Mostly monomeric in the absence of calcium. Forms higher oligomers in a calcium-dependent manner. Dimers associate to form tetramers, that then form linear homomer chains. Interacts with ASPH and TRDN. Post-translationally, phosphorylation in the C-terminus, probably by CK2, moderately increases calcium buffering capacity. N-glycosylated.

It localises to the sarcoplasmic reticulum lumen. Calsequestrin is a high-capacity, moderate affinity, calcium-binding protein and thus acts as an internal calcium store in muscle. Calcium ions are bound by clusters of acidic residues at the protein surface, especially at the interface between subunits. Can bind around 60 Ca(2+) ions. Regulates the release of lumenal Ca(2+) via the calcium release channel RYR2; this plays an important role in triggering muscle contraction. Plays a role in excitation-contraction coupling in the heart and in regulating the rate of heart beats. This is Calsequestrin-2 (CASQ2) from Pongo abelii (Sumatran orangutan).